The sequence spans 223 residues: MSPAAAPLTLALSKGRIFEETMPLLAEAGIEVPENPESSRKLILPTSDPGLRLIIVRASDVPTYVQYGAADLGIAGKDVLIEHAAQQSGRLYQPIDLNIAKCRLCVAVRQDFDYQAAVHQGARLRVATKYVQSAREHFAAKGVHVDIIKLYGSMELAPLVGLADAIVDLVSTGGTLRANGLAAVEDVMPISSRLIVNQAALKTRGARLQPLIDAFRRASERIA.

Belongs to the ATP phosphoribosyltransferase family. Short subfamily. Heteromultimer composed of HisG and HisZ subunits.

The protein resides in the cytoplasm. The catalysed reaction is 1-(5-phospho-beta-D-ribosyl)-ATP + diphosphate = 5-phospho-alpha-D-ribose 1-diphosphate + ATP. Its pathway is amino-acid biosynthesis; L-histidine biosynthesis; L-histidine from 5-phospho-alpha-D-ribose 1-diphosphate: step 1/9. Functionally, catalyzes the condensation of ATP and 5-phosphoribose 1-diphosphate to form N'-(5'-phosphoribosyl)-ATP (PR-ATP). Has a crucial role in the pathway because the rate of histidine biosynthesis seems to be controlled primarily by regulation of HisG enzymatic activity. The chain is ATP phosphoribosyltransferase from Bordetella bronchiseptica (strain ATCC BAA-588 / NCTC 13252 / RB50) (Alcaligenes bronchisepticus).